Here is a 166-residue protein sequence, read N- to C-terminus: NAD(P)H-quinone oxidoreductase subunit I, chloroplastic (166 aa).

4Fe-4S ferredoxin-type domains are found at residues 55-84 (GRIH…VDWK) and 95-124 (LNYS…MTEE). Residues C64, C67, C70, C74, C104, C107, C110, and C114 each coordinate [4Fe-4S] cluster.

Belongs to the complex I 23 kDa subunit family. In terms of assembly, NDH is composed of at least 16 different subunits, 5 of which are encoded in the nucleus. [4Fe-4S] cluster is required as a cofactor.

The protein resides in the plastid. It is found in the chloroplast thylakoid membrane. It carries out the reaction a plastoquinone + NADH + (n+1) H(+)(in) = a plastoquinol + NAD(+) + n H(+)(out). The catalysed reaction is a plastoquinone + NADPH + (n+1) H(+)(in) = a plastoquinol + NADP(+) + n H(+)(out). In terms of biological role, NDH shuttles electrons from NAD(P)H:plastoquinone, via FMN and iron-sulfur (Fe-S) centers, to quinones in the photosynthetic chain and possibly in a chloroplast respiratory chain. The immediate electron acceptor for the enzyme in this species is believed to be plastoquinone. Couples the redox reaction to proton translocation, and thus conserves the redox energy in a proton gradient. The sequence is that of NAD(P)H-quinone oxidoreductase subunit I, chloroplastic from Chaetymenia peduncularis (Daisy).